A 205-amino-acid polypeptide reads, in one-letter code: Peptidyl-tRNA hydrolase (205 aa).

Position 17 (Tyr-17) interacts with tRNA. His-22 serves as the catalytic Proton acceptor. TRNA-binding residues include Tyr-73 and Asn-75.

Belongs to the PTH family. Monomer.

It is found in the cytoplasm. It catalyses the reaction an N-acyl-L-alpha-aminoacyl-tRNA + H2O = an N-acyl-L-amino acid + a tRNA + H(+). Hydrolyzes ribosome-free peptidyl-tRNAs (with 1 or more amino acids incorporated), which drop off the ribosome during protein synthesis, or as a result of ribosome stalling. Its function is as follows. Catalyzes the release of premature peptidyl moieties from peptidyl-tRNA molecules trapped in stalled 50S ribosomal subunits, and thus maintains levels of free tRNAs and 50S ribosomes. The polypeptide is Peptidyl-tRNA hydrolase (Maridesulfovibrio salexigens (strain ATCC 14822 / DSM 2638 / NCIMB 8403 / VKM B-1763) (Desulfovibrio salexigens)).